A 365-amino-acid polypeptide reads, in one-letter code: 2'-hydroxybiphenyl-2-sulfinate desulfinase (365 aa).

C27 is a catalytic residue. 2'-hydroxybiphenyl-2-sulfinate contacts are provided by C27, H60, and R70. The active site involves R70.

This sequence belongs to the DszB desulfinase family. Monomer.

It is found in the cytoplasm. It carries out the reaction 2'-hydroxybiphenyl-2-sulfinate + H2O = biphenyl-2-ol + sulfite + H(+). Its pathway is sulfur metabolism; dibenzothiophene degradation. Its function is as follows. Catalyzes the third and final step of the '4S' desulfurization pathway that removes covalently bound sulfur from dibenzothiophene (DBT) without breaking carbon-carbon bonds. Oxidizes 2-(2'-hydroxyphenyl)benzene sulphinate (HBPS) to 2-hydroxybiphenyl (HBP) plus sulfite. The rate-limiting step of the '4S' desulfurization pathway. This chain is 2'-hydroxybiphenyl-2-sulfinate desulfinase, found in Rhodococcus erythropolis (Arthrobacter picolinophilus).